Here is a 698-residue protein sequence, read N- to C-terminus: 4-hydroxybutyrate--CoA ligase [ADP-forming] (698 aa).

Residues 491 to 544 (QEVLKAYGLPLPKSTLAKNEAEAVKAAKKIGYPVVMKIASPQIIHKSDAGGVKV) enclose the ATP-grasp domain. 517 to 544 (AKKIGYPVVMKIASPQIIHKSDAGGVKV) is a binding site for ATP.

This sequence in the N-terminal section; belongs to the acetate CoA ligase alpha subunit family. In the C-terminal section; belongs to the acetate CoA ligase beta subunit family. Requires Mg(2+) as cofactor. Mn(2+) serves as cofactor.

It carries out the reaction 4-hydroxybutanoate + ATP + CoA = 4-hydroxybutanoyl-CoA + ADP + phosphate. Functionally, involved in thaumarchaeal hydroxypropionate/hydroxybutyrate (HP/HB) cycle, a modified version of the autotrophic HP/HB cycle of Crenarchaeota. Catalyzes the formation of 4-hydroxybutyryl-CoA, ADP and phosphate from 4-hydroxybutyrate, coenzyme A (CoA) and ATP. Can also use acetate, propionate and butyrate, with poor catalytic efficiency. The sequence is that of 4-hydroxybutyrate--CoA ligase [ADP-forming] from Nitrosopumilus maritimus (strain SCM1).